The following is a 272-amino-acid chain: Phosphatidylglycerol--prolipoprotein diacylglyceryl transferase (272 aa).

Transmembrane regions (helical) follow at residues 17 to 37 (LQVH…WGLA), 55 to 75 (LVFY…VLFY), 90 to 110 (VWTG…AMLF), 125 to 145 (FVAP…FIGG), 174 to 194 (PSQI…LWWF), 202 to 222 (MAVS…MEFF), and 230 to 250 (GFIL…MLLI). R138 is an a 1,2-diacyl-sn-glycero-3-phospho-(1'-sn-glycerol) binding site.

The protein belongs to the Lgt family.

Its subcellular location is the cell inner membrane. It carries out the reaction L-cysteinyl-[prolipoprotein] + a 1,2-diacyl-sn-glycero-3-phospho-(1'-sn-glycerol) = an S-1,2-diacyl-sn-glyceryl-L-cysteinyl-[prolipoprotein] + sn-glycerol 1-phosphate + H(+). The protein operates within protein modification; lipoprotein biosynthesis (diacylglyceryl transfer). Catalyzes the transfer of the diacylglyceryl group from phosphatidylglycerol to the sulfhydryl group of the N-terminal cysteine of a prolipoprotein, the first step in the formation of mature lipoproteins. The chain is Phosphatidylglycerol--prolipoprotein diacylglyceryl transferase from Acinetobacter baumannii (strain AB307-0294).